The primary structure comprises 258 residues: Uroplakin-1a (258 aa).

Residues 1 to 14 are Cytoplasmic-facing; sequence MASAAAAEAEKGSP. A helical transmembrane segment spans residues 15-35; sequence VVVGLLVVGNIIILLSGLSLF. Topologically, residues 36-59 are extracellular; it reads AETIWVTADQYRVYPLMGVSGKDD. The helical transmembrane segment at 60–86 threads the bilayer; sequence VFAGAWIAIFCGFSFFMVASFGVGAAL. Topologically, residues 87-91 are cytoplasmic; it reads CRRRS. Residues 92-112 traverse the membrane as a helical segment; that stretch reads MVLTYLVLMLIVYIFECASCI. Residues 113-230 are Extracellular-facing; sequence TSYTHRDYMV…HIGHAIDSYT (118 aa). An N-linked (GlcNAc...) asparagine glycan is attached at asparagine 170. Residues 231–252 form a helical membrane-spanning segment; it reads WGISWFGFAILMWTLPVMLIAM. At 253–258 the chain is on the cytoplasmic side; sequence YFYTML.

This sequence belongs to the tetraspanin (TM4SF) family. In terms of assembly, homodimer; disulfide-linked. Interacts with uroplakin-2 (UPK2). In terms of tissue distribution, high expression restricted to ureteric urothelium (most superficial cells); low expression in prostate. Expression in normal urothelial cells is lost in culture. Some expression in tumor cell lines derived from urothelial malignancies.

The protein localises to the membrane. Component of the asymmetric unit membrane (AUM); a highly specialized biomembrane elaborated by terminally differentiated urothelial cells. May play an important role in normal bladder epithelial physiology, possibly in regulating membrane permeability of superficial umbrella cells or in stabilizing the apical membrane through AUM/cytoskeletal interactions. This is Uroplakin-1a (UPK1A) from Homo sapiens (Human).